The sequence spans 326 residues: Probable magnesium transporter NIPA7 (326 aa).

The Extracellular segment spans residues 1–4 (MVSD). A helical transmembrane segment spans residues 5 to 25 (NEMGLVLAVSSSVFIGSSFIL). Residues 26-51 (KKKGLKRAAANGTRAGFGGYTYLLEP) are Cytoplasmic-facing. A helical transmembrane segment spans residues 52-72 (LWWVGLVTMTFGEIANFVAYV). Topologically, residues 73-76 (YAPA) are extracellular. Residues 77 to 97 (VLVTPLGALSIIISAVLAHFL) traverse the membrane as a helical segment. Residues 98 to 104 (LDEKLRK) are Cytoplasmic-facing. Residues 105-125 (MGVWGCVCCIVGSVMIVIHAP) form a helical membrane-spanning segment. At 126–142 (QEQTPNSVEEIWKLAMQ) the chain is on the extracellular side. A helical transmembrane segment spans residues 143–163 (PAFLIYVAISMSIVLALILYC). Topologically, residues 164–169 (EPLCGQ) are cytoplasmic. A helical transmembrane segment spans residues 170–190 (TNILVYIGICSLMGSLTVMSI). The Extracellular portion of the chain corresponds to 191–209 (KAVGIAIKLTFEGINQIWY). The chain crosses the membrane as a helical span at residues 210–230 (PETWFFAMVAAICVVMQMIYL). Over 231–240 (NKALDTFNAA) the chain is Cytoplasmic. Residues 241 to 261 (IVSPIYYVMFTTLTIVASAIM) form a helical membrane-spanning segment. The Extracellular segment spans residues 262-272 (FKDWNGQNTDS). Residues 273 to 293 (IASEICGFITVLTGTVILHST) form a helical membrane-spanning segment. At 294-326 (REEEQASPRRMRWQDSGKSFDEEHLTSLYSPEY) the chain is on the cytoplasmic side.

Belongs to the NIPA (TC 2.A.7) family. Homodimer.

It localises to the cell membrane. The protein localises to the early endosome. Acts as a Mg(2+) transporter. Can also transport other divalent cations such as Fe(2+), Sr(2+), Ba(2+), Mn(2+) and Co(2+) but to a much less extent than Mg(2+). The sequence is that of Probable magnesium transporter NIPA7 from Arabidopsis thaliana (Mouse-ear cress).